The following is a 358-amino-acid chain: tRNA-specific 2-thiouridylase MnmA (358 aa).

Residues 7–14 (AMSGGVDS) and L33 contribute to the ATP site. C101 acts as the Nucleophile in catalysis. Residues C101 and C197 are joined by a disulfide bond. Residue G125 coordinates ATP. Residues 147–149 (KDQ) are interaction with tRNA. The active-site Cysteine persulfide intermediate is C197.

Belongs to the MnmA/TRMU family.

The protein localises to the cytoplasm. It catalyses the reaction S-sulfanyl-L-cysteinyl-[protein] + uridine(34) in tRNA + AH2 + ATP = 2-thiouridine(34) in tRNA + L-cysteinyl-[protein] + A + AMP + diphosphate + H(+). In terms of biological role, catalyzes the 2-thiolation of uridine at the wobble position (U34) of tRNA, leading to the formation of s(2)U34. This is tRNA-specific 2-thiouridylase MnmA from Rickettsia typhi (strain ATCC VR-144 / Wilmington).